The chain runs to 633 residues: Proline-rich receptor-like protein kinase PERK4 (633 aa).

Residues 1 to 29 (MASSPESAPPTNSTSSPSPPSNTNSTTSS) are compositionally biased toward low complexity. The interval 1 to 145 (MASSPESAPP…GSSGGGGGGR (145 aa)) is disordered. Residues 1-151 (MASSPESAPP…GGGRSNTNTA (151 aa)) lie on the Extracellular side of the membrane. N-linked (GlcNAc...) asparagine glycans are attached at residues Asn12 and Asn24. 2 stretches are compositionally biased toward pro residues: residues 30 to 41 (PPAPSPPSPTPP) and 48 to 65 (SPPPDSTSPPAPQAPNPP). Asn66 is a glycosylation site (N-linked (GlcNAc...) asparagine). Residues 77–90 (QGGGGERGNGGNNG) are compositionally biased toward gly residues. A compositionally biased stretch (low complexity) spans 106-135 (SRSNGDNGGSRSSPPGDTGGSRSDNPPSSG). Gly residues predominate over residues 136–145 (GSSGGGGGGR). A helical membrane pass occupies residues 152 to 172 (IIVGVLVGAGLLMIVLIIVCL). Over 173-633 (RRKKKRKDSF…MGTKSPTPPK (461 aa)) the chain is Cytoplasmic. Residues 193–222 (QYYGNNNNNNASQNYPNWHLNSQGQNQQST) are compositionally biased toward low complexity. Residues 193–255 (QYYGNNNNNN…SMYSGPSRPV (63 aa)) form a disordered region. Thr273 carries the post-translational modification Phosphothreonine. The Protein kinase domain occupies 284–562 (FTDANLLGQG…VRALEGEVSL (279 aa)). ATP contacts are provided by residues 290–298 (LGQGGFGYV) and Lys312. Tyr357 bears the Phosphotyrosine mark. Asp408 acts as the Proton acceptor in catalysis. Ser441 carries the post-translational modification Phosphoserine. 2 positions are modified to phosphothreonine: Thr442 and Thr447. Tyr455 is subject to Phosphotyrosine. The span at 608–619 (FPVSDCEGTSSN) shows a compositional bias: polar residues. A disordered region spans residues 608–633 (FPVSDCEGTSSNDSRDMGTKSPTPPK).

It belongs to the protein kinase superfamily. Ser/Thr protein kinase family. As to expression, mostly expressed in inflorescence bolts. Also present in roots, stems, germinated seeds, cotyledons, pollen, stamen and stigma.

The protein localises to the cell membrane. It carries out the reaction L-seryl-[protein] + ATP = O-phospho-L-seryl-[protein] + ADP + H(+). It catalyses the reaction L-threonyl-[protein] + ATP = O-phospho-L-threonyl-[protein] + ADP + H(+). Activated by ABA and Ca(2+). Functionally, required during abscisic acid (ABA)-mediated activation of Ca(2+) channels. Regulates ABA signaling pathways. Modulates the expression of genes related to cell elongation and ABA signaling during root growth. The chain is Proline-rich receptor-like protein kinase PERK4 (PERK4) from Arabidopsis thaliana (Mouse-ear cress).